Consider the following 283-residue polypeptide: Probable replication-associated protein repA1 (283 aa).

Belongs to the IncFII RepA family.

Its function is as follows. This protein is essential for plasmid replication; it is involved in copy control functions. In Buchnera aphidicola subsp. Schizaphis graminum (strain Sg), this protein is Probable replication-associated protein repA1 (repA1).